The primary structure comprises 156 residues: ADP-ribosylation factor-like protein 2-binding protein (156 aa).

This sequence belongs to the ARL2BP family.

The protein resides in the cytoplasm. It is found in the mitochondrion intermembrane space. The protein localises to the cytoskeleton. It localises to the microtubule organizing center. Its subcellular location is the centrosome. The protein resides in the nucleus. It is found in the spindle. The protein localises to the cilium basal body. Functionally, plays a role as an effector of the ADP-ribosylation factor-like protein 2, ARL2. This chain is ADP-ribosylation factor-like protein 2-binding protein (arl2bp), found in Xenopus laevis (African clawed frog).